The chain runs to 331 residues: F-box protein At2g26160 (331 aa).

Residues 4 to 52 (PEWSELPGDLINLTANRFSSISDVLRVRSICKPWRSAAATPKSFQCNLP) form the F-box domain.

The protein is F-box protein At2g26160 of Arabidopsis thaliana (Mouse-ear cress).